Here is a 452-residue protein sequence, read N- to C-terminus: Cysteine--tRNA ligase (452 aa).

Cys35 contributes to the Zn(2+) binding site. Residues 37–47 (PTVYDRAHLGN) carry the 'HIGH' region motif. Zn(2+)-binding residues include Cys215, His240, and Glu244. The 'KMSKS' region motif lies at 273–277 (KMSKS). Lys276 is an ATP binding site.

It belongs to the class-I aminoacyl-tRNA synthetase family. As to quaternary structure, monomer. Zn(2+) serves as cofactor.

It is found in the cytoplasm. It catalyses the reaction tRNA(Cys) + L-cysteine + ATP = L-cysteinyl-tRNA(Cys) + AMP + diphosphate. This is Cysteine--tRNA ligase from Gluconobacter oxydans (strain 621H) (Gluconobacter suboxydans).